Reading from the N-terminus, the 326-residue chain is Phenylalanine--tRNA ligase alpha subunit (326 aa).

E251 is a binding site for Mg(2+).

Belongs to the class-II aminoacyl-tRNA synthetase family. Phe-tRNA synthetase alpha subunit type 1 subfamily. Tetramer of two alpha and two beta subunits. Mg(2+) is required as a cofactor.

The protein localises to the cytoplasm. It catalyses the reaction tRNA(Phe) + L-phenylalanine + ATP = L-phenylalanyl-tRNA(Phe) + AMP + diphosphate + H(+). This Pseudoalteromonas atlantica (strain T6c / ATCC BAA-1087) protein is Phenylalanine--tRNA ligase alpha subunit.